A 194-amino-acid polypeptide reads, in one-letter code: Imidazoleglycerol-phosphate dehydratase (194 aa).

Belongs to the imidazoleglycerol-phosphate dehydratase family.

Its subcellular location is the cytoplasm. The enzyme catalyses D-erythro-1-(imidazol-4-yl)glycerol 3-phosphate = 3-(imidazol-4-yl)-2-oxopropyl phosphate + H2O. It participates in amino-acid biosynthesis; L-histidine biosynthesis; L-histidine from 5-phospho-alpha-D-ribose 1-diphosphate: step 6/9. The polypeptide is Imidazoleglycerol-phosphate dehydratase (Bacillus cereus (strain ZK / E33L)).